Consider the following 185-residue polypeptide: V-type ATP synthase subunit E (185 aa).

The protein belongs to the V-ATPase E subunit family.

Its function is as follows. Produces ATP from ADP in the presence of a proton gradient across the membrane. The sequence is that of V-type ATP synthase subunit E from Deinococcus geothermalis (strain DSM 11300 / CIP 105573 / AG-3a).